The following is a 658-amino-acid chain: DNA mismatch repair protein MutL (658 aa).

Basic and acidic residues predominate over residues 114–130 (RQEDSSHATQVKAEDGK). Residues 114-137 (RQEDSSHATQVKAEDGKLSSPTAA) are disordered.

It belongs to the DNA mismatch repair MutL/HexB family.

In terms of biological role, this protein is involved in the repair of mismatches in DNA. It is required for dam-dependent methyl-directed DNA mismatch repair. May act as a 'molecular matchmaker', a protein that promotes the formation of a stable complex between two or more DNA-binding proteins in an ATP-dependent manner without itself being part of a final effector complex. This chain is DNA mismatch repair protein MutL, found in Neisseria meningitidis serogroup C / serotype 2a (strain ATCC 700532 / DSM 15464 / FAM18).